The primary structure comprises 377 residues: tRNA(Met) cytidine acetate ligase (377 aa).

ATP contacts are provided by residues 7–20 (VVEY…HRYH), glycine 101, asparagine 151, and arginine 176.

The protein belongs to the TmcAL family.

It localises to the cytoplasm. It catalyses the reaction cytidine(34) in elongator tRNA(Met) + acetate + ATP = N(4)-acetylcytidine(34) in elongator tRNA(Met) + AMP + diphosphate. In terms of biological role, catalyzes the formation of N(4)-acetylcytidine (ac(4)C) at the wobble position of elongator tRNA(Met), using acetate and ATP as substrates. First activates an acetate ion to form acetyladenylate (Ac-AMP) and then transfers the acetyl group to tRNA to form ac(4)C34. This chain is tRNA(Met) cytidine acetate ligase, found in Limosilactobacillus reuteri (strain DSM 20016) (Lactobacillus reuteri).